The sequence spans 407 residues: Aminoacylase-1 (407 aa).

An N-acetylalanine modification is found at Ala-2. His-80 is a binding site for Zn(2+). Residue Asp-82 is part of the active site. Residue Asp-113 coordinates Zn(2+). Glu-147 acts as the Proton acceptor in catalysis. Residues Glu-148, Glu-175, and His-372 each coordinate Zn(2+).

Belongs to the peptidase M20A family. As to quaternary structure, homodimer. Interacts with SPHK1. Zn(2+) serves as cofactor.

The protein resides in the cytoplasm. It carries out the reaction an N-acyl-L-amino acid + H2O = an L-alpha-amino acid + a carboxylate. It catalyses the reaction N-acetyl-L-methionine + H2O = L-methionine + acetate. The enzyme catalyses N-acetyl-L-glutamine + H2O = L-glutamine + acetate. Functionally, catalyzes the hydrolysis of N-acetylated amino acids to acetate and free amino acids. The protein is Aminoacylase-1 (ACY1) of Sus scrofa (Pig).